The following is a 260-amino-acid chain: Uroplakin-1b (260 aa).

The Cytoplasmic segment spans residues Met-1 to Leu-15. The chain crosses the membrane as a helical span at residues Ile-16–Phe-36. Residues Val-37–Trp-60 are Extracellular-facing. The helical transmembrane segment at Ile-61–Met-81 threads the bilayer. The Cytoplasmic portion of the chain corresponds to Lys-82–Lys-86. Residues Ile-87–Ile-107 form a helical membrane-spanning segment. At Thr-108–His-229 the chain is on the extracellular side. Residues Ala-230–Gly-250 form a helical membrane-spanning segment. Residues Thr-251 to Tyr-260 lie on the Cytoplasmic side of the membrane.

The protein belongs to the tetraspanin (TM4SF) family. Heterodimer with uroplakin-3A (UPK3A) or uroplakin-3B (UPK3B). N-glycosylated with high-mannose oligosaccharides. In terms of tissue distribution, bladder epithelium.

Its subcellular location is the membrane. In terms of biological role, component of the asymmetric unit membrane (AUM); a highly specialized biomembrane elaborated by terminally differentiated urothelial cells. May play an important role in normal bladder epithelial physiology, possibly in regulating membrane permeability of superficial umbrella cells or in stabilizing the apical membrane through AUM/cytoskeletal interactions. This Homo sapiens (Human) protein is Uroplakin-1b (UPK1B).